We begin with the raw amino-acid sequence, 233 residues long: DnaA regulatory inactivator Hda (233 aa).

The protein belongs to the DnaA family. HdA subfamily. As to quaternary structure, the active form seems to be an ADP-bound monomer. Forms the RIDA complex (regulatory inactivation of DnaA) of ATP-DnaA, ADP-Hda and the DNA-loaded beta sliding clamp (dnaN).

In terms of biological role, mediates the interaction of DNA replication initiator protein DnaA with DNA polymerase subunit beta sliding clamp (dnaN). Stimulates hydrolysis of ATP-DnaA to ADP-DnaA, rendering DnaA inactive for reinitiation, a process called regulatory inhibition of DnaA or RIDA. The polypeptide is DnaA regulatory inactivator Hda (Shigella boydii serotype 4 (strain Sb227)).